The following is a 398-amino-acid chain: MNIHEYQAKAVLREFGVPVGHGFPIFKASEAEAAAKQLGGPVWVVKSQIHAGGRGKGKFKEASAGDKGGVRLAKSIDEVKEFAKQMLGATLVTVQTGADGKQVNRLYIEEGSDIDKEFYLSLLVDRATSRISFVVSTEGGMSIEDVAHETPEKIVSFTVDPATGIMGHHGRTVAKALNLKGEQAKQAEAMVAKLYTAFVAKDMDMLEINPLVLTKQGDLKCLDAKISFDGNALYRHTDIQALRDETEEDAKEIEASKYDLNYVTLDGTIGCMVNGAGLAMATMDIIKLYGMSPANFLDVGGGASKEKVTAAFKIITADPNVKGILINIFGGIMKCDVIAEGVVAAVKEVGLDVPLVVRLEGTNVEAGKKIIKHSGLNVLPADNLDDAAQKIVAAVKGA.

Positions 9 to 254 (KAVLREFGVP…ETEEDAKEIE (246 aa)) constitute an ATP-grasp domain. ATP contacts are provided by residues lysine 46, 53 to 55 (GRG), glutamate 109, serine 112, and glutamate 117. Mg(2+)-binding residues include asparagine 209 and aspartate 223. Substrate is bound by residues asparagine 274 and 331–333 (GIM).

Belongs to the succinate/malate CoA ligase beta subunit family. Heterotetramer of two alpha and two beta subunits. Requires Mg(2+) as cofactor.

It carries out the reaction succinate + ATP + CoA = succinyl-CoA + ADP + phosphate. The catalysed reaction is GTP + succinate + CoA = succinyl-CoA + GDP + phosphate. It participates in carbohydrate metabolism; tricarboxylic acid cycle; succinate from succinyl-CoA (ligase route): step 1/1. In terms of biological role, succinyl-CoA synthetase functions in the citric acid cycle (TCA), coupling the hydrolysis of succinyl-CoA to the synthesis of either ATP or GTP and thus represents the only step of substrate-level phosphorylation in the TCA. The beta subunit provides nucleotide specificity of the enzyme and binds the substrate succinate, while the binding sites for coenzyme A and phosphate are found in the alpha subunit. The chain is Succinate--CoA ligase [ADP-forming] subunit beta from Rhodopseudomonas palustris (strain ATCC BAA-98 / CGA009).